Here is a 488-residue protein sequence, read N- to C-terminus: Catalase (488 aa).

The interval 1–24 (MTDRRNLTTNQGVPIGDNQNSMTA) is disordered. Over residues 7 to 23 (LTTNQGVPIGDNQNSMT) the composition is skewed to polar residues. Residues His-55 and Asn-128 contribute to the active site. Tyr-338 provides a ligand contact to heme.

The protein belongs to the catalase family. Requires heme as cofactor.

It is found in the cytoplasm. The catalysed reaction is 2 H2O2 = O2 + 2 H2O. In terms of biological role, decomposes hydrogen peroxide into water and oxygen; serves to protect cells from the toxic effects of hydrogen peroxide. The chain is Catalase (kat) from Listeria seeligeri.